Consider the following 257-residue polypeptide: Acetylglutamate kinase (257 aa).

Substrate is bound by residues 43 to 44 (GG), arginine 65, and asparagine 157. Residues 180–185 (DISGIL) and 208–210 (IIT) each bind ATP.

It belongs to the acetylglutamate kinase family. ArgB subfamily. As to quaternary structure, homodimer.

The protein localises to the cytoplasm. The catalysed reaction is N-acetyl-L-glutamate + ATP = N-acetyl-L-glutamyl 5-phosphate + ADP. It functions in the pathway amino-acid biosynthesis; L-arginine biosynthesis; N(2)-acetyl-L-ornithine from L-glutamate: step 2/4. Functionally, catalyzes the ATP-dependent phosphorylation of N-acetyl-L-glutamate. This chain is Acetylglutamate kinase, found in Sodalis glossinidius (strain morsitans).